Consider the following 560-residue polypeptide: Arginine--tRNA ligase (560 aa).

The short motif at 135–145 (ANPTGLLHMGN) is the 'HIGH' region element.

Belongs to the class-I aminoacyl-tRNA synthetase family. Monomer.

It localises to the cytoplasm. It carries out the reaction tRNA(Arg) + L-arginine + ATP = L-arginyl-tRNA(Arg) + AMP + diphosphate. The protein is Arginine--tRNA ligase of Moorella thermoacetica (strain ATCC 39073 / JCM 9320).